A 470-amino-acid polypeptide reads, in one-letter code: Isocitrate dehydrogenase (NAD(+)), mitochondrial (470 aa).

The transit peptide at methionine 1–arginine 26 directs the protein to the mitochondrion. Residues threonine 138–threonine 140 and asparagine 159 each bind NAD(+). D-threo-isocitrate contacts are provided by residues serine 157–arginine 163, arginine 193, tyrosine 200, lysine 275, and aspartate 319. Aspartate 319 contacts Mg(2+). Position 324 (lysine 324) interacts with NAD(+). Aspartate 343 lines the D-threo-isocitrate pocket. Mg(2+) contacts are provided by aspartate 343 and aspartate 347. NAD(+) contacts are provided by residues histidine 380–aspartate 385 and asparagine 399.

The protein belongs to the isocitrate and isopropylmalate dehydrogenases family. Forms homodimers. The cofactor is Mg(2+). It depends on Mn(2+) as a cofactor.

Its subcellular location is the mitochondrion. The enzyme catalyses D-threo-isocitrate + NAD(+) = 2-oxoglutarate + CO2 + NADH. With respect to regulation, the homodimer exhibits allosteric regulation by isocitrate. Performs an essential role in the oxidative function of the tricarboxylic acid cycle and respiration. Catalyzes the decarboxylation of isocitrate to produce 2-oxoglutarate and generate NADH to provide electrons for energy production. The sequence is that of Isocitrate dehydrogenase (NAD(+)), mitochondrial from Ostreococcus tauri.